The chain runs to 286 residues: N-alpha-acetyltransferase 80 (286 aa).

A disordered region spans residues 33 to 54; that stretch reads TFNPGPTELTLDPEHQPEETPA. An N-acetyltransferase domain is found at 60–207; that stretch reads LTLEPVHRRP…VFTSRRLPAT (148 aa). Substrate-binding positions include arginine 85 and 90–93; that span reads RLHS. Residues 141-143, 149-154, and glutamine 179 each bind acetyl-CoA; these read VVV and GRGFGR. The disordered stretch occupies residues 212–269; sequence FPTAPSPRPPRKAPNLTAQAAPRGPKGPPLPPPPPLPECLTISPPVPSGPPSKSLLET. Residues 236–248 show a composition bias toward pro residues; sequence PKGPPLPPPPPLP.

The protein belongs to the acetyltransferase family. In terms of tissue distribution, strongly expressed in heart and skeletal muscle, followed by brain and pancreas, with weak expression in kidney, liver, and lung and no expression in placenta.

The protein localises to the cytoplasm. It is found in the cytosol. The catalysed reaction is N-terminal L-aspartyl-L-aspartyl-L-aspartyl-[protein] + acetyl-CoA = N-terminal N-acetyl-L-aspartyl-L-aspartyl-L-aspartyl-[protein] + CoA + H(+). It carries out the reaction N-terminal L-glutamyl-L-glutamyl-L-glutamyl-[protein] + acetyl-CoA = N-terminal N-acetyl-L-glutamyl-L-glutamyl-L-glutamyl-[protein] + CoA + H(+). Functionally, N-alpha-acetyltransferase that specifically mediates the acetylation of the acidic amino terminus of processed forms of beta- and gamma-actin (ACTB and ACTG, respectively). N-terminal acetylation of processed beta- and gamma-actin regulates actin filament depolymerization and elongation. In vivo, preferentially displays N-terminal acetyltransferase activity towards acid N-terminal sequences starting with Asp-Asp-Asp and Glu-Glu-Glu. In vitro, shows high activity towards Met-Asp-Glu-Leu and Met-Asp-Asp-Asp. May act as a tumor suppressor. The polypeptide is N-alpha-acetyltransferase 80 (Homo sapiens (Human)).